Here is a 317-residue protein sequence, read N- to C-terminus: Ventral anterior homeobox 1 (317 aa).

The interval 1 to 62 is disordered; sequence MEVRYSQDSE…CEKSRASSGD (62 aa). The segment covering 18 to 27 has biased composition (basic and acidic residues); that stretch reads GLKEGKEGKD. Positions 92–151 form a DNA-binding region, homeobox; the sequence is PKRTRTSFTAEQLYRLEMEFQRCQYVVGRERTELARQLNLSETQVKVWFQNRRTKQKKDQ. Residues 203 to 248 form a disordered region; the sequence is GPSLGITANGGSSSSSRSSAGSSGTAGGSPPLPTVTSSGTVTGLQG. Low complexity predominate over residues 212–225; the sequence is GGSSSSSRSSAGSS. The span at 236-247 shows a compositional bias: polar residues; it reads TVTSSGTVTGLQ.

It belongs to the EMX homeobox family. As to expression, expressed in the anterior neural keel and later in the preoptic area and optic stalk.

Its subcellular location is the nucleus. Its function is as follows. Transcription factor that is required for closure of the choroid fissure and together with Vax2 is required for optic nerve differentiation and to limit retinal development to the optic cup. The chain is Ventral anterior homeobox 1 (vax1) from Danio rerio (Zebrafish).